A 293-amino-acid chain; its full sequence is Protein phosphatase 1 regulatory subunit 3B (293 aa).

Positions 129–237 (RQRIENDHVC…NNQGKNYRII (109 aa)) constitute a CBM21 domain.

In terms of assembly, interacts with glycogen, PPP1CC catalytic subunit of PP1 and PYGL. Associates with glycogen particles. Forms complexes with debranching enzyme, glycogen phosphorylase, glycogen synthase and phosphorylase kinase which is necessary for its regulation of PP1 activity.

Acts as a glycogen-targeting subunit for phosphatase PP1. Facilitates interaction of the PP1 with enzymes of the glycogen metabolism and regulates its activity. Suppresses the rate at which PP1 dephosphorylates (inactivates) glycogen phosphorylase and enhances the rate at which it activates glycogen synthase and therefore limits glycogen breakdown. This is Protein phosphatase 1 regulatory subunit 3B (ppp1r3b) from Danio rerio (Zebrafish).